The chain runs to 362 residues: MSDRVQRPIRVLVVDDSAFMRKVLTELLESDPLITVVGTARDGQDGLEKVLQLQPDVVTLDIEMPRLDGYGTLREIMARRPTPVVMVSSHTREGAEATIRALALGAVDFVAKPSGSISLNMHVARDELVAKVKAAAAATPRVRTAAVELAPVSPREKMQALAGLRRQTGFGDRLPRRLVLIGCSTGGPGALHQIIPRLPADLPAGVLVVQHMPPGFTRSLAQRLDELSAISVREARAGDPVRAGQVLVAPGGYHMLVDAEGRIALDQGPPVHGVRPAVDVTFESVLPVWKERLVGVILTGMGYDGAKGMAQLRKAGGWTIAEDASTCVVYGMPRVVVELGAAREVLPVHSIADAITRAVGEG.

A Response regulatory domain is found at 10–127 (RVLVVDDSAF…SLNMHVARDE (118 aa)). Asp61 bears the 4-aspartylphosphate mark. The CheB-type methylesterase domain occupies 173 to 362 (RLPRRLVLIG…DAITRAVGEG (190 aa)). Active-site residues include Ser184, His211, and Asp304.

The protein belongs to the CheB family. Phosphorylated by CheA. Phosphorylation of the N-terminal regulatory domain activates the methylesterase activity.

The protein resides in the cytoplasm. It carries out the reaction [protein]-L-glutamate 5-O-methyl ester + H2O = L-glutamyl-[protein] + methanol + H(+). It catalyses the reaction L-glutaminyl-[protein] + H2O = L-glutamyl-[protein] + NH4(+). Involved in chemotaxis. Part of a chemotaxis signal transduction system that modulates chemotaxis in response to various stimuli. Catalyzes the demethylation of specific methylglutamate residues introduced into the chemoreceptors (methyl-accepting chemotaxis proteins or MCP) by CheR. Also mediates the irreversible deamidation of specific glutamine residues to glutamic acid. This is Protein-glutamate methylesterase/protein-glutamine glutaminase from Symbiobacterium thermophilum (strain DSM 24528 / JCM 14929 / IAM 14863 / T).